The primary structure comprises 899 residues: MFISDPTDSLITPLPDLTAHSEAQSRNLGIPDWLKQIEADIATALEKGVDIRHLVEARAASIDSLLIELFKLHELTQTDLALFAVGGYGRGELSPYSDVDILILSPDTLSAEISQKVDGFVARLWDVGIEPGIAVRTIEDCLQVATDITVATNLLEARLLIGNDSLSAIPNNVVQQTWSQKEFYDAKMAEARARHLLHNGTEYNLEPDIKKSPGGLRDIHTIGWITKRYFRITKLYDLVPQDFLTEKEFDELMFAEGFLWRIRHHLHHLTGRNENKLLFDYQRDIAERMGYEQSEEDEPNAAVENFMRDYYRCAMQISTLSEMLTSHYYETLIEARLPESERPEKSVLNARFNRVGDHIAIAHHHVFAQHPEAILEMFLLMGQHGIKHIRTRTLRALKIAARGIDQHYRDNPLHKKLFLDNLKEQNYLFHRLRIMKRYGVLANYMPQFVNLIGLMQYDLFHRYTVDAHILLLIRMLHRFTSPKYQDDFALVGSIYKRIERKEIIVLAAIFHDIAKGRGGDHSELGERDAIEFCLSHGMSEADAKLIGWLTRYHLLMSMTAQKQDISDPEVVTKFANLVGNVTHLNHLYVLTVADMNATNPQLWNSWRASLMKQLYTQTRRILRADLDAPTNRQEMIATTRQQALTMLDKVDNQHMNREEVLALWDELGDEYFLREIPEAIMWHTEAILNHPPIGRASDANSEPLIVLREHRELALDAVQIFIYTQDQANLFAVTMAVFDQMNLDVLDARIITATRDFALDSYVLLDRHGTLLTDPESREELTRRLIDAFKNPETPKLVQKRLPRRLKNFQVPTTIDFNYNEASRQHVMSLTTLDQPGLLARIGQVFLNEGIEVHAARITTLGERAEDMFYISDIGDNMLSDAKLERLRTTLIDVLTPSC.

Residues 1-347 (MFISDPTDSL…PESERPEKSV (347 aa)) are uridylyltransferase. The tract at residues 348–718 (LNARFNRVGD…EHRELALDAV (371 aa)) is uridylyl-removing. The HD domain maps to 465–581 (VDAHILLLIR…TKFANLVGNV (117 aa)). 2 consecutive ACT domains span residues 719-804 (QIFI…RLPR) and 827-899 (VMSL…TPSC).

This sequence belongs to the GlnD family. Requires Mg(2+) as cofactor.

The enzyme catalyses [protein-PII]-L-tyrosine + UTP = [protein-PII]-uridylyl-L-tyrosine + diphosphate. It catalyses the reaction [protein-PII]-uridylyl-L-tyrosine + H2O = [protein-PII]-L-tyrosine + UMP + H(+). Its activity is regulated as follows. Uridylyltransferase (UTase) activity is inhibited by glutamine, while glutamine activates uridylyl-removing (UR) activity. Modifies, by uridylylation and deuridylylation, the PII regulatory proteins (GlnB and homologs), in response to the nitrogen status of the cell that GlnD senses through the glutamine level. Under low glutamine levels, catalyzes the conversion of the PII proteins and UTP to PII-UMP and PPi, while under higher glutamine levels, GlnD hydrolyzes PII-UMP to PII and UMP (deuridylylation). Thus, controls uridylylation state and activity of the PII proteins, and plays an important role in the regulation of nitrogen assimilation and metabolism. This chain is Bifunctional uridylyltransferase/uridylyl-removing enzyme, found in Psychrobacter sp. (strain PRwf-1).